Consider the following 182-residue polypeptide: Large ribosomal subunit protein bL25 (182 aa).

This sequence belongs to the bacterial ribosomal protein bL25 family. CTC subfamily. Part of the 50S ribosomal subunit; part of the 5S rRNA/L5/L18/L25 subcomplex. Contacts the 5S rRNA. Binds to the 5S rRNA independently of L5 and L18.

Functionally, this is one of the proteins that binds to the 5S RNA in the ribosome where it forms part of the central protuberance. The protein is Large ribosomal subunit protein bL25 of Borrelia hermsii (strain HS1 / DAH).